The chain runs to 750 residues: Tegument protein UL46 homolog (750 aa).

Disordered regions lie at residues 437 to 484, 525 to 593, 610 to 669, and 692 to 750; these read FCCP…SPRT, QRSD…DYMR, YTPY…EVVY, and SASR…VSSL. A compositionally biased stretch (polar residues) spans 465-484; it reads LRSSRQLPTSPPSNIVSPRT. The segment covering 528 to 540 has biased composition (low complexity); the sequence is DSSSSDNSTCSST. Residues 541-553 are compositionally biased toward polar residues; sequence ETQYITLPSTPSP. 2 stretches are compositionally biased toward basic and acidic residues: residues 710–727 and 739–750; these read VCRE…DGFI and KHPDQTERVSSL.

This sequence belongs to the herpesviridae HHV-1 VP11/12 protein family.

It localises to the virion tegument. Its subcellular location is the host cell membrane. Functionally, modulates alpha trans-inducing factor-dependent activation of alpha genes. The sequence is that of Tegument protein UL46 homolog from Equine herpesvirus 1 (strain V592) (EHV-1).